The sequence spans 222 residues: 7-cyano-7-deazaguanine synthase (222 aa).

Residue 8–18 (LSGGLDSATCL) participates in ATP binding. Zn(2+) is bound by residues Cys187, Cys197, Cys200, and Cys203.

It belongs to the QueC family. It depends on Zn(2+) as a cofactor.

The enzyme catalyses 7-carboxy-7-deazaguanine + NH4(+) + ATP = 7-cyano-7-deazaguanine + ADP + phosphate + H2O + H(+). The protein operates within purine metabolism; 7-cyano-7-deazaguanine biosynthesis. In terms of biological role, catalyzes the ATP-dependent conversion of 7-carboxy-7-deazaguanine (CDG) to 7-cyano-7-deazaguanine (preQ(0)). The polypeptide is 7-cyano-7-deazaguanine synthase (Alcanivorax borkumensis (strain ATCC 700651 / DSM 11573 / NCIMB 13689 / SK2)).